A 227-amino-acid chain; its full sequence is Uracil-DNA glycosylase (227 aa).

Aspartate 68 serves as the catalytic Proton acceptor.

Belongs to the uracil-DNA glycosylase (UDG) superfamily. UNG family.

It localises to the cytoplasm. It catalyses the reaction Hydrolyzes single-stranded DNA or mismatched double-stranded DNA and polynucleotides, releasing free uracil.. Its function is as follows. Excises uracil residues from the DNA which can arise as a result of misincorporation of dUMP residues by DNA polymerase or due to deamination of cytosine. The sequence is that of Uracil-DNA glycosylase from Mycobacterium sp. (strain JLS).